A 69-amino-acid polypeptide reads, in one-letter code: Large ribosomal subunit protein uL29 (69 aa).

This sequence belongs to the universal ribosomal protein uL29 family.

This Mycoplasmopsis agalactiae (strain NCTC 10123 / CIP 59.7 / PG2) (Mycoplasma agalactiae) protein is Large ribosomal subunit protein uL29.